The primary structure comprises 271 residues: RELT-like protein 1 (271 aa).

The N-terminal stretch at 1-23 is a signal peptide; it reads MAPRALPGSAVLAAAVFVGGAVS. Residues 24-57 are Extracellular-facing; it reads SPLVAPDNGSSRTLHSRTETTPSPSNDTGNGHPE. The tract at residues 28–53 is disordered; the sequence is APDNGSSRTLHSRTETTPSPSNDTGN. 2 N-linked (GlcNAc...) asparagine glycosylation sites follow: Asn31 and Asn49. A compositionally biased stretch (polar residues) spans 31–52; it reads NGSSRTLHSRTETTPSPSNDTG. Residues 58–78 form a helical membrane-spanning segment; it reads YIAYALVPVFFIMGLFGVLIC. Topologically, residues 79–271 are cytoplasmic; it reads HLLKKKGYRC…PVKRERSGTE (193 aa). A coiled-coil region spans residues 89–113; that stretch reads TTEAEQDIEEEKVEKIELNDSVNEN. Ser109 and Ser114 each carry phosphoserine. 2 disordered regions span residues 145–173 and 233–271; these read DPES…TPGK and VEHK…SGTE. A compositionally biased stretch (pro residues) spans 155–165; sequence PGSPPVSPGPL. A compositionally biased stretch (basic and acidic residues) spans 233–244; that stretch reads VEHKSNQKERRS. Ser244 and Ser247 each carry phosphoserine.

It belongs to the RELT family. In terms of assembly, interacts with RELT, RELL2 and OXSR1. Interacts with PLSCR1. In terms of processing, phosphorylated in vitro by OXSR1. Widely expressed. Expressed at highest levels in the placenta, skeletal muscle, spleen and testis.

It is found in the cell membrane. Its function is as follows. Induces activation of MAPK14/p38 cascade, when overexpressed. Induces apoptosis, when overexpressed. This chain is RELT-like protein 1 (RELL1), found in Homo sapiens (Human).